Reading from the N-terminus, the 169-residue chain is Ribosome maturation factor RimM (169 aa).

One can recognise a PRC barrel domain in the interval 94–168; sequence DDEFYHADLI…RIVADPPEGL (75 aa).

This sequence belongs to the RimM family. Binds ribosomal protein uS19.

The protein localises to the cytoplasm. An accessory protein needed during the final step in the assembly of 30S ribosomal subunit, possibly for assembly of the head region. Essential for efficient processing of 16S rRNA. May be needed both before and after RbfA during the maturation of 16S rRNA. It has affinity for free ribosomal 30S subunits but not for 70S ribosomes. The sequence is that of Ribosome maturation factor RimM from Cereibacter sphaeroides (strain ATCC 17023 / DSM 158 / JCM 6121 / CCUG 31486 / LMG 2827 / NBRC 12203 / NCIMB 8253 / ATH 2.4.1.) (Rhodobacter sphaeroides).